The primary structure comprises 124 residues: Small ribosomal subunit protein uS12 (124 aa).

Residue aspartate 89 is modified to 3-methylthioaspartic acid.

Belongs to the universal ribosomal protein uS12 family. Part of the 30S ribosomal subunit. Contacts proteins S8 and S17. May interact with IF1 in the 30S initiation complex.

In terms of biological role, with S4 and S5 plays an important role in translational accuracy. Functionally, interacts with and stabilizes bases of the 16S rRNA that are involved in tRNA selection in the A site and with the mRNA backbone. Located at the interface of the 30S and 50S subunits, it traverses the body of the 30S subunit contacting proteins on the other side and probably holding the rRNA structure together. The combined cluster of proteins S8, S12 and S17 appears to hold together the shoulder and platform of the 30S subunit. The protein is Small ribosomal subunit protein uS12 of Blochmanniella pennsylvanica (strain BPEN).